A 230-amino-acid polypeptide reads, in one-letter code: Cytidylate kinase (230 aa).

12 to 20 (GPSGAGKGT) contributes to the ATP binding site.

This sequence belongs to the cytidylate kinase family. Type 1 subfamily.

It is found in the cytoplasm. The catalysed reaction is CMP + ATP = CDP + ADP. It catalyses the reaction dCMP + ATP = dCDP + ADP. The protein is Cytidylate kinase of Shewanella halifaxensis (strain HAW-EB4).